The chain runs to 236 residues: Uridylate kinase (236 aa).

10–13 is an ATP binding site; it reads KLSG. Gly52 serves as a coordination point for UMP. ATP-binding residues include Gly53 and Arg57. UMP contacts are provided by residues Asp72 and 133-140; that span reads TGNPFFTT. ATP-binding residues include Thr160, Tyr166, and Asp169.

The protein belongs to the UMP kinase family. As to quaternary structure, homohexamer.

The protein resides in the cytoplasm. It carries out the reaction UMP + ATP = UDP + ADP. It participates in pyrimidine metabolism; CTP biosynthesis via de novo pathway; UDP from UMP (UMPK route): step 1/1. Its activity is regulated as follows. Inhibited by UTP. In terms of biological role, catalyzes the reversible phosphorylation of UMP to UDP. This Polaromonas sp. (strain JS666 / ATCC BAA-500) protein is Uridylate kinase.